The sequence spans 348 residues: MGCVQCKCCSRYPSSSSDGDSRGPLEANGVLKGKDQKPLGSIHVPSPNFDMVYSVLSQRGYYPDSPDKENQDTYCIKTELQGNPNVHFFGVFDGHGVLGTQCSNFVKERVVEMLSEDPTLLEDPEKAYKSAFLRVNEELHDSEIDDSMSGTTAITVLVVGDKIYVANVGDSRAVLAVKDRNRILAEDLSYDQTPFRKDECERVKACGARVLSVDQVEGLKDPNIQTWANEESEGGDPPRLWVQNGMYPGTAFTRSVGDFTAESIGVIAEPEVSMVHLSPNHLFFVVASDGIFEFLPSQAVVDMVGRYADPRDGCAAAAAESYKLWLEHENRTDDITIIIVQIKKLSNE.

Low complexity predominate over residues 11 to 24 (RYPSSSSDGDSRGP). The tract at residues 11 to 40 (RYPSSSSDGDSRGPLEANGVLKGKDQKPLG) is disordered. Residues 52 to 342 (VYSVLSQRGY…DDITIIIVQI (291 aa)) enclose the PPM-type phosphatase domain. Residues aspartate 93, glycine 94, aspartate 289, and aspartate 333 each contribute to the Mn(2+) site.

Belongs to the PP2C family. Mg(2+) is required as a cofactor. Mn(2+) serves as cofactor.

It catalyses the reaction O-phospho-L-seryl-[protein] + H2O = L-seryl-[protein] + phosphate. The catalysed reaction is O-phospho-L-threonyl-[protein] + H2O = L-threonyl-[protein] + phosphate. This chain is Probable protein phosphatase 2C 35, found in Arabidopsis thaliana (Mouse-ear cress).